Reading from the N-terminus, the 776-residue chain is Protein phosphatase 1 regulatory subunit 21 (776 aa).

Coiled coils occupy residues 4-206 (GDLQ…LKTL), 432-466 (RLHD…TTND), and 555-597 (ESRE…KETL).

In terms of assembly, component of the FERRY complex.

Its subcellular location is the early endosome. Its function is as follows. Component of the FERRY complex (Five-subunit Endosomal Rab5 and RNA/ribosome intermediary). The FERRY complex directly interacts with mRNAs and RAB5A, and functions as a RAB5A effector involved in the localization and the distribution of specific mRNAs most likely by mediating their endosomal transport. The complex recruits mRNAs and ribosomes to early endosomes through direct mRNA-interaction. Putative regulator of protein phosphatase 1 (PP1) activity. May play a role in the endosomal sorting process or in endosome maturation pathway. The polypeptide is Protein phosphatase 1 regulatory subunit 21 (ppp1r21) (Xenopus laevis (African clawed frog)).